The sequence spans 318 residues: Pantothenate kinase (318 aa).

96–103 contacts ATP; sequence GSVAVGKS.

Belongs to the prokaryotic pantothenate kinase family.

It is found in the cytoplasm. It carries out the reaction (R)-pantothenate + ATP = (R)-4'-phosphopantothenate + ADP + H(+). It functions in the pathway cofactor biosynthesis; coenzyme A biosynthesis; CoA from (R)-pantothenate: step 1/5. In Bradyrhizobium diazoefficiens (strain JCM 10833 / BCRC 13528 / IAM 13628 / NBRC 14792 / USDA 110), this protein is Pantothenate kinase.